The chain runs to 146 residues: Mitochondrial pyruvate carrier 3 (146 aa).

A mitochondrion-targeting transit peptide spans 1–20 (MSASAFNFAFRRFWNSETGP). The next 3 helical transmembrane spans lie at 23–39 (VHFW…FAGL), 55–71 (LSLL…SFVI), and 78–94 (LASV…YHLT).

This sequence belongs to the mitochondrial pyruvate carrier (MPC) (TC 2.A.105) family. In terms of assembly, the functional 150 kDa pyruvate import complex is a heteromer of MPC1 and either MPC2 or MPC3.

The protein resides in the mitochondrion. It localises to the mitochondrion inner membrane. Functionally, mediates the uptake of pyruvate into mitochondria. In Saccharomyces cerevisiae (strain ATCC 204508 / S288c) (Baker's yeast), this protein is Mitochondrial pyruvate carrier 3.